Reading from the N-terminus, the 198-residue chain is ATP-dependent Clp protease proteolytic subunit 2 (198 aa).

The Nucleophile role is filled by serine 101. The active site involves histidine 126.

The protein belongs to the peptidase S14 family. Fourteen ClpP subunits assemble into 2 heptameric rings which stack back to back to give a disk-like structure with a central cavity, resembling the structure of eukaryotic proteasomes.

It localises to the cytoplasm. The catalysed reaction is Hydrolysis of proteins to small peptides in the presence of ATP and magnesium. alpha-casein is the usual test substrate. In the absence of ATP, only oligopeptides shorter than five residues are hydrolyzed (such as succinyl-Leu-Tyr-|-NHMec, and Leu-Tyr-Leu-|-Tyr-Trp, in which cleavage of the -Tyr-|-Leu- and -Tyr-|-Trp bonds also occurs).. Cleaves peptides in various proteins in a process that requires ATP hydrolysis. Has a chymotrypsin-like activity. Plays a major role in the degradation of misfolded proteins. The polypeptide is ATP-dependent Clp protease proteolytic subunit 2 (Thermosynechococcus vestitus (strain NIES-2133 / IAM M-273 / BP-1)).